We begin with the raw amino-acid sequence, 228 residues long: DNA-binding response regulator MtrA (228 aa).

One can recognise a Response regulatory domain in the interval 7 to 120 (RILVVDDDPS…ELVARVRARL (114 aa)). Asp56 carries the post-translational modification 4-aspartylphosphate. The segment at residues 128–227 (AEMLSIGDVE…VRGVGYKAGP (100 aa)) is a DNA-binding region (ompR/PhoB-type).

As to quaternary structure, probably a monomer when inactive, phosphorylation may permit it to oligomerize. The monomeric form does not seem to be phosphorylated. Phosphorylated by MtrB.

Its subcellular location is the cytoplasm. In terms of biological role, member of the two-component regulatory system MtrA/MtrB, responding to environmental signals. Controls expression of a number of genes including dnaA, ripA, fbpB and probably itself. Probably plays a role in cell division. The protein is DNA-binding response regulator MtrA (mtrA) of Mycolicibacterium smegmatis (strain ATCC 700084 / mc(2)155) (Mycobacterium smegmatis).